Here is a 188-residue protein sequence, read N- to C-terminus: MKVIASSLRKGNVVEKDGRLYVILSAENIHPGKGTPVTQLDMRRITDGVKVSERYRTTEQVERAFVEDREHTFLYSDGEGFHFMNPESYEQVAVPEDVIGDQAAYLQEGMAVMLSLHNGVPLAIELPQRVTLEVTETEPVTKGQTASSSYKPATLSNGVRTQVPPHITAGTRVVIMTADGSYVERAKD.

A disordered region spans residues 139–163; it reads PVTKGQTASSSYKPATLSNGVRTQV. Positions 142-160 are enriched in polar residues; it reads KGQTASSSYKPATLSNGVR.

This sequence belongs to the elongation factor P family.

The protein resides in the cytoplasm. The protein operates within protein biosynthesis; polypeptide chain elongation. In terms of biological role, involved in peptide bond synthesis. Stimulates efficient translation and peptide-bond synthesis on native or reconstituted 70S ribosomes in vitro. Probably functions indirectly by altering the affinity of the ribosome for aminoacyl-tRNA, thus increasing their reactivity as acceptors for peptidyl transferase. This Methylobacterium nodulans (strain LMG 21967 / CNCM I-2342 / ORS 2060) protein is Elongation factor P.